The following is a 492-amino-acid chain: ATP synthase subunit beta, chloroplastic (492 aa).

ATP is bound at residue 170 to 177 (GGAGVGKT).

This sequence belongs to the ATPase alpha/beta chains family. In terms of assembly, F-type ATPases have 2 components, CF(1) - the catalytic core - and CF(0) - the membrane proton channel. CF(1) has five subunits: alpha(3), beta(3), gamma(1), delta(1), epsilon(1). CF(0) has four main subunits: a(1), b(1), b'(1) and c(9-12).

It localises to the plastid. It is found in the chloroplast thylakoid membrane. The enzyme catalyses ATP + H2O + 4 H(+)(in) = ADP + phosphate + 5 H(+)(out). Functionally, produces ATP from ADP in the presence of a proton gradient across the membrane. The catalytic sites are hosted primarily by the beta subunits. In Huperzia lucidula (Shining clubmoss), this protein is ATP synthase subunit beta, chloroplastic.